We begin with the raw amino-acid sequence, 588 residues long: MSKRTTYCGLVTEELLNQKVTLKGWVHNRRDLGGLIFVDLRDREGIVQIVFNPDFSEEALSVAETVRSEYVVEVEGTVTKRDPDTVNSKIKTGQVEVQVSNISIINKSETPPFSINEENQNVDENIRLKYRYLDLRRPELAQTFKMRHQTTRAIREYLDNNGFFDIETPVLTKSTPEGARDYLVPSRVHEGEFYALPQSPQLFKQLLMISGFDKYYQIVKCFRDEDLRADRQPEFTQVDIEMSFVDQEDVIQMGEEMLRKVVKDVKGIDVSGPFPRMTYEEAMRRYGSDKPDTRFEMELKDVSQLGREMDFKVFKDTVENNGEVKAIVAKGAADNYTRKDMDALTEFVNIYGAKGLAWVKVVDDGLSGPIARFFEDSNVATLKDLTQAESGDLVMFVADKPNVVAQSLGALRIKIAKELGLIDENKLNFLWVTDWPLLEYDEDAKRYVAAHHPFTSPKQEDISKLDSEPQNAQANAYDIVLNGYELGGGSIRIADGELQEKMFEVLGFTKEQAREQFGFLLDAFKYGAPPHGGIALGLDRLVMLLTNRTNLRDTIAFPKTASATCLLTDAPGEVSDKQLEELSLRIRH.

Glu-177 is an L-aspartate binding site. An aspartate region spans residues Gln-201–Lys-204. Arg-223 serves as a coordination point for L-aspartate. ATP contacts are provided by residues Arg-223–Glu-225 and Gln-232. His-451 contributes to the L-aspartate binding site. Glu-485 contributes to the ATP binding site. Arg-492 is an L-aspartate binding site. Gly-537–Arg-540 lines the ATP pocket.

Belongs to the class-II aminoacyl-tRNA synthetase family. Type 1 subfamily. As to quaternary structure, homodimer.

It is found in the cytoplasm. It catalyses the reaction tRNA(Asp) + L-aspartate + ATP = L-aspartyl-tRNA(Asp) + AMP + diphosphate. Functionally, catalyzes the attachment of L-aspartate to tRNA(Asp) in a two-step reaction: L-aspartate is first activated by ATP to form Asp-AMP and then transferred to the acceptor end of tRNA(Asp). This Staphylococcus haemolyticus (strain JCSC1435) protein is Aspartate--tRNA ligase.